A 101-amino-acid polypeptide reads, in one-letter code: Small ribosomal subunit protein uS14 (101 aa).

The protein belongs to the universal ribosomal protein uS14 family. As to quaternary structure, part of the 30S ribosomal subunit. Contacts proteins S3 and S10.

Binds 16S rRNA, required for the assembly of 30S particles and may also be responsible for determining the conformation of the 16S rRNA at the A site. The protein is Small ribosomal subunit protein uS14 of Maricaulis maris (strain MCS10) (Caulobacter maris).